The sequence spans 405 residues: ATP-sensitive inward rectifier potassium channel 15 (405 aa).

Residues 1–90 are Cytoplasmic-facing; sequence MVARWVKGSE…LQDLWTTVID (90 aa). The helical transmembrane segment at 91–117 threads the bilayer; sequence MKWRYKLTLFAATFVMTWFLFGVVYYA. Over 118–143 the chain is Extracellular; that stretch reads IAFIHGDLELGESNSNHTPCIMKVDS. The segment at residues 144–160 is an intramembrane region (helical; Pore-forming); sequence LTGAFLFSLESQTTIGY. A Selectivity filter motif is present at residues 157-162; that stretch reads TIGYGV. Topologically, residues 161–169 are extracellular; that stretch reads GVRSITEEC. A helical membrane pass occupies residues 170–195; the sequence is PHAIFLLVAQLVITTLIEIFITGTFL. Residues 196–405 are Cytoplasmic-facing; sequence AKIARPKKRA…RSLLLQQSNV (210 aa).

The protein belongs to the inward rectifier-type potassium channel (TC 1.A.2.1) family. KCNJ15 subfamily. Can form heteromultimeric channels with Kir5.1/KCNJ16. Interacts with PATJ.

The protein localises to the membrane. It is found in the cell membrane. The enzyme catalyses K(+)(in) = K(+)(out). Channel activity is regulated by variations of cytosolic pH; reversibly inhibited by acidic pH values. Inhibited by Ba(2+) and Cs(+) in a voltage-dependent manner. Inward rectifier potassium channels are characterized by a greater tendency to allow potassium to flow into the cell rather than out of it. Their voltage dependence is regulated by the concentration of extracellular potassium; as external potassium is raised, the voltage range of the channel opening shifts to more positive voltages. The inward rectification is mainly due to the blockage of outward current by internal magnesium. The polypeptide is ATP-sensitive inward rectifier potassium channel 15 (Kcnj15) (Rattus norvegicus (Rat)).